The following is a 293-amino-acid chain: MFRILLFLATNIAVVLVASVTLRLLGVEPYLQGSGLNLTSLLIFCAVFGMSGAMISLFLSKWIAKMSTRTQVIEQPRDAVESWLLDTVRELSSEAGIKMPEVGIFPAHQSNAFATGWNKNDALVAVSEGLLRRFSKDEIRAVLAHEIGHVANGDMVTLALIQGVINTFVMFFARIIGNIVDKAVFKNENGHGIGFFITTIFAEIVLGILASIIVMWFSRKREFRADAMGAKLAGSGAMIAALQRLKAETQMPNEMPDTLTAFGITEGVKQGFKALFSSHPPLDERIAALAANR.

The next 2 helical transmembrane spans lie at 2–22 (FRILLFLATNIAVVLVASVTL) and 38–58 (LTSLLIFCAVFGMSGAMISLF). His145 provides a ligand contact to Zn(2+). Glu146 is a catalytic residue. His149 contributes to the Zn(2+) binding site. The next 2 helical transmembrane spans lie at 156–176 (VTLALIQGVINTFVMFFARII) and 193–213 (IGFFITTIFAEIVLGILASII). Zn(2+) is bound at residue Glu222.

This sequence belongs to the peptidase M48B family. Zn(2+) serves as cofactor.

The protein resides in the cell inner membrane. In Hahella chejuensis (strain KCTC 2396), this protein is Protease HtpX.